The sequence spans 102 residues: Cysteine-rich venom protein VAR9 (102 aa).

A signal peptide spans 1 to 19 (MILLKLYLTLAAILCQSRG). One can recognise an SCP domain in the interval 41–80 (NKHNDLRRTVDPPAKNMLKMSWDNIIAESAKRAALRCNYK).

The protein belongs to the CRISP family. In terms of processing, contains 8 disulfide bonds. Expressed by the venom gland.

It is found in the secreted. In terms of biological role, blocks ryanodine receptors, and potassium channels. In Varanus varius (Lace monitor lizard), this protein is Cysteine-rich venom protein VAR9.